Reading from the N-terminus, the 144-residue chain is 3-dehydroquinate dehydratase (144 aa).

The active-site Proton acceptor is the Y22. Positions 73, 79, and 86 each coordinate substrate. H99 serves as the catalytic Proton donor. Residues 100 to 101 (IS) and R110 contribute to the substrate site.

This sequence belongs to the type-II 3-dehydroquinase family. As to quaternary structure, homododecamer.

It catalyses the reaction 3-dehydroquinate = 3-dehydroshikimate + H2O. It participates in metabolic intermediate biosynthesis; chorismate biosynthesis; chorismate from D-erythrose 4-phosphate and phosphoenolpyruvate: step 3/7. Its function is as follows. Catalyzes a trans-dehydration via an enolate intermediate. This chain is 3-dehydroquinate dehydratase, found in Mycobacteroides abscessus (strain ATCC 19977 / DSM 44196 / CCUG 20993 / CIP 104536 / JCM 13569 / NCTC 13031 / TMC 1543 / L948) (Mycobacterium abscessus).